A 533-amino-acid polypeptide reads, in one-letter code: MAFANLRKVLISDSLDPCCRKILQDGGLQVVEKQNLSKEELIAELQDCEGLIVRSATKVTADVINAAEKLQVVGRAGTGVDNVDLEAATRKGILVMNTPNGNSLSAAELTCGMIMCLARQIPQATASMKDGKWERKKFMGTELNGKTLGILGLGRIGREVATRMQSFGMKTIGYDPIISPEVSASFGVQQLPLEEIWPLCDFITVHTPLLPSTTGLLNDNTFAQCKKGVRVVNCARGGIVDEGALLRALQSGQCAGAALDVFTEEPPRDRALVDHENVISCPHLGASTKEAQSRCGEEIAVQFVDMVKGKSLTGVVNAQALTSAFSPHTKPWIGLAEALGTLMRAWAGSPKGTIQVITQGTSLKNAGNCLSPAVIVGLLKEASKQADVNLVNAKLLVKEAGLNVTTSHSPAAPGEQGFGECLLAVALAGAPYQAVGLVQGTTPVLQGLNGAVFRPEVPLRRDLPLLLFRTQTSDPAMLPTMIGLLAEAGVRLLSYQTSLVSDGETWHVMGISSLLPSLEAWKQHVTEAFQFHF.

Ala-2 carries the N-acetylalanine modification. A Phosphoserine modification is found at Ser-14. At Lys-21 the chain carries N6-acetyllysine; alternate. Lys-21 is covalently cross-linked (Glycyl lysine isopeptide (Lys-Gly) (interchain with G-Cter in SUMO1); alternate). A Glycyl lysine isopeptide (Lys-Gly) (interchain with G-Cter in SUMO2); alternate cross-link involves residue Lys-21. Lys-58 bears the N6-acetyllysine mark. Residues Thr-78, 155–156 (RI), Asp-175, Thr-207, 234–236 (CAR), and Asp-260 each bind NAD(+). Phosphothreonine is present on Thr-78. Arg-236 is an active-site residue. Glu-265 is a catalytic residue. The active-site Proton donor is His-283. 283 to 286 (HLGA) is a binding site for NAD(+).

The protein belongs to the D-isomer specific 2-hydroxyacid dehydrogenase family. Homotetramer.

The catalysed reaction is (2R)-3-phosphoglycerate + NAD(+) = 3-phosphooxypyruvate + NADH + H(+). It carries out the reaction (R)-2-hydroxyglutarate + NAD(+) = 2-oxoglutarate + NADH + H(+). The enzyme catalyses (S)-malate + NAD(+) = oxaloacetate + NADH + H(+). The protein operates within amino-acid biosynthesis; L-serine biosynthesis; L-serine from 3-phospho-D-glycerate: step 1/3. Functionally, catalyzes the reversible oxidation of 3-phospho-D-glycerate to 3-phosphonooxypyruvate, the first step of the phosphorylated L-serine biosynthesis pathway. Also catalyzes the reversible oxidation of 2-hydroxyglutarate to 2-oxoglutarate and the reversible oxidation of (S)-malate to oxaloacetate. This chain is D-3-phosphoglycerate dehydrogenase (PHGDH), found in Homo sapiens (Human).